We begin with the raw amino-acid sequence, 265 residues long: PBSX phage terminase small subunit (265 aa).

Residues lysine 241 to serine 265 are disordered.

It to B.subtilis YqaS and B.subtilis phage SPP1 terminase small subunit. In terms of assembly, dimer of a small and a large subunit.

Its function is as follows. Functions as a terminase. The polypeptide is PBSX phage terminase small subunit (xtmA) (Bacillus subtilis (strain 168)).